The primary structure comprises 286 residues: uncharacterized protein (286 aa).

A helical membrane pass occupies residues 8–28 (PLSGFISSLIWWLLFFYLIMA).

It to M.jannaschii MJ1495.

It is found in the membrane. This is an uncharacterized protein from Methanocaldococcus jannaschii (strain ATCC 43067 / DSM 2661 / JAL-1 / JCM 10045 / NBRC 100440) (Methanococcus jannaschii).